The sequence spans 366 residues: tRNA/tmRNA (uracil-C(5))-methyltransferase (366 aa).

S-adenosyl-L-methionine is bound by residues glutamine 190, tyrosine 218, asparagine 223, glutamate 239, and aspartate 299. Residue cysteine 324 is the Nucleophile of the active site. Catalysis depends on glutamate 358, which acts as the Proton acceptor.

This sequence belongs to the class I-like SAM-binding methyltransferase superfamily. RNA M5U methyltransferase family. TrmA subfamily.

The enzyme catalyses uridine(54) in tRNA + S-adenosyl-L-methionine = 5-methyluridine(54) in tRNA + S-adenosyl-L-homocysteine + H(+). It catalyses the reaction uridine(341) in tmRNA + S-adenosyl-L-methionine = 5-methyluridine(341) in tmRNA + S-adenosyl-L-homocysteine + H(+). Functionally, dual-specificity methyltransferase that catalyzes the formation of 5-methyluridine at position 54 (m5U54) in all tRNAs, and that of position 341 (m5U341) in tmRNA (transfer-mRNA). This is tRNA/tmRNA (uracil-C(5))-methyltransferase from Cellvibrio japonicus (strain Ueda107) (Pseudomonas fluorescens subsp. cellulosa).